Consider the following 102-residue polypeptide: Protein translation factor SUI1 homolog (102 aa).

The protein belongs to the SUI1 family.

This is Protein translation factor SUI1 homolog from Methanosarcina acetivorans (strain ATCC 35395 / DSM 2834 / JCM 12185 / C2A).